The chain runs to 129 residues: Lysozyme C-1 (129 aa).

The region spanning 1–129 (KVFERCELAR…VSSYVEGCTL (129 aa)) is the C-type lysozyme domain. Disulfide bonds link C6/C127, C30/C115, C65/C81, and C77/C95. Catalysis depends on residues E35 and D53.

It belongs to the glycosyl hydrolase 22 family. As to quaternary structure, monomer.

It catalyses the reaction Hydrolysis of (1-&gt;4)-beta-linkages between N-acetylmuramic acid and N-acetyl-D-glucosamine residues in a peptidoglycan and between N-acetyl-D-glucosamine residues in chitodextrins.. Its function is as follows. Lysozymes have primarily a bacteriolytic function; those in tissues and body fluids are associated with the monocyte-macrophage system and enhance the activity of immunoagents. In Capra hircus (Goat), this protein is Lysozyme C-1.